The following is a 214-amino-acid chain: Thiamine-phosphate synthase (214 aa).

Residues 37–41 (QYREK) and Asn-73 contribute to the 4-amino-2-methyl-5-(diphosphooxymethyl)pyrimidine site. Mg(2+)-binding residues include Asp-74 and Asp-93. Ser-112 is a 4-amino-2-methyl-5-(diphosphooxymethyl)pyrimidine binding site. 139–141 (TIS) serves as a coordination point for 2-[(2R,5Z)-2-carboxy-4-methylthiazol-5(2H)-ylidene]ethyl phosphate. Residue Lys-142 participates in 4-amino-2-methyl-5-(diphosphooxymethyl)pyrimidine binding. 2-[(2R,5Z)-2-carboxy-4-methylthiazol-5(2H)-ylidene]ethyl phosphate contacts are provided by residues Gly-171 and 191 to 192 (IS).

This sequence belongs to the thiamine-phosphate synthase family. The cofactor is Mg(2+).

It catalyses the reaction 2-[(2R,5Z)-2-carboxy-4-methylthiazol-5(2H)-ylidene]ethyl phosphate + 4-amino-2-methyl-5-(diphosphooxymethyl)pyrimidine + 2 H(+) = thiamine phosphate + CO2 + diphosphate. It carries out the reaction 2-(2-carboxy-4-methylthiazol-5-yl)ethyl phosphate + 4-amino-2-methyl-5-(diphosphooxymethyl)pyrimidine + 2 H(+) = thiamine phosphate + CO2 + diphosphate. The catalysed reaction is 4-methyl-5-(2-phosphooxyethyl)-thiazole + 4-amino-2-methyl-5-(diphosphooxymethyl)pyrimidine + H(+) = thiamine phosphate + diphosphate. It participates in cofactor biosynthesis; thiamine diphosphate biosynthesis; thiamine phosphate from 4-amino-2-methyl-5-diphosphomethylpyrimidine and 4-methyl-5-(2-phosphoethyl)-thiazole: step 1/1. In terms of biological role, condenses 4-methyl-5-(beta-hydroxyethyl)thiazole monophosphate (THZ-P) and 2-methyl-4-amino-5-hydroxymethyl pyrimidine pyrophosphate (HMP-PP) to form thiamine monophosphate (TMP). The chain is Thiamine-phosphate synthase from Listeria monocytogenes serotype 4a (strain HCC23).